We begin with the raw amino-acid sequence, 608 residues long: Glutamine--fructose-6-phosphate aminotransferase [isomerizing] (608 aa).

C2 acts as the Nucleophile; for GATase activity in catalysis. Residues 2 to 217 (CGIVGIVGHK…DGDWAVVGKT (216 aa)) enclose the Glutamine amidotransferase type-2 domain. SIS domains follow at residues 283-422 (TDID…ARGT) and 456-598 (LSRE…VDQP). K603 acts as the For Fru-6P isomerization activity in catalysis.

Its subcellular location is the cytoplasm. It carries out the reaction D-fructose 6-phosphate + L-glutamine = D-glucosamine 6-phosphate + L-glutamate. Its function is as follows. Involved in the production of the root hair deformation (HAD) factor specifically on medicago. This is Glutamine--fructose-6-phosphate aminotransferase [isomerizing] (nodM) from Rhizobium leguminosarum bv. viciae.